Reading from the N-terminus, the 143-residue chain is Phosphoprotein 32 (143 aa).

The segment covering Met1–Ser14 has biased composition (polar residues). A disordered region spans residues Met1–Lys32.

It belongs to the varicellovirus ORF32 protein family. Phosphorylated by ORF47 protein.

This is Phosphoprotein 32 from Homo sapiens (Human).